The primary structure comprises 495 residues: NADP/NAD-dependent aldehyde dehydrogenase PuuC (495 aa).

244-249 (GSTRTG) serves as a coordination point for NAD(+). Active-site residues include Glu267 and Cys302.

This sequence belongs to the aldehyde dehydrogenase family.

It catalyses the reaction an aldehyde + NADP(+) + H2O = a carboxylate + NADPH + 2 H(+). It carries out the reaction an aldehyde + NAD(+) + H2O = a carboxylate + NADH + 2 H(+). The enzyme catalyses 4-(gamma-L-glutamylamino)butanal + NADP(+) + H2O = 4-(gamma-L-glutamylamino)butanoate + NADPH + 2 H(+). The catalysed reaction is 4-(gamma-L-glutamylamino)butanal + NAD(+) + H2O = 4-(gamma-L-glutamylamino)butanoate + NADH + 2 H(+). It participates in amine and polyamine degradation; putrescine degradation; 4-aminobutanoate from putrescine: step 3/4. With respect to regulation, lithium ions exhibits the highest inhibition (97%). To a lesser extent (5-20%), potassium, sodium, and ammonium ions also inhibit PuuC activity. Transition metals, such as copper and zinc ions inhibit PuuC activity by more than 90%. The presence of heavy metals (mercury, silver) or sodium hydrogensulfite in the reaction mixture completely inactivate PuuC; in contrast, disulfide reductants such as DTT and 2-mercaptoethanol significantly increase its activity by 75% and 27%, respectively. Its function is as follows. Catalyzes the oxidation of 3-hydroxypropionaldehyde (3-HPA) to 3-hydroxypropionic acid (3-HP). It acts preferentially with NAD but can also use NADP. 3-HPA appears to be the most suitable substrate for PuuC followed by isovaleraldehyde, propionaldehyde, butyraldehyde, and valeraldehyde. It might play a role in propionate and/or acetic acid metabolisms. Also involved in the breakdown of putrescine through the oxidation of gamma-Glu-gamma-aminobutyraldehyde to gamma-Glu-gamma-aminobutyrate (gamma-Glu-GABA). This chain is NADP/NAD-dependent aldehyde dehydrogenase PuuC, found in Escherichia coli (strain K12).